Reading from the N-terminus, the 194-residue chain is Peptidyl-tRNA hydrolase (194 aa).

Y17 provides a ligand contact to tRNA. H22 acts as the Proton acceptor in catalysis. Residues Y68, N70, and N116 each contribute to the tRNA site.

Belongs to the PTH family. As to quaternary structure, monomer.

The protein localises to the cytoplasm. It catalyses the reaction an N-acyl-L-alpha-aminoacyl-tRNA + H2O = an N-acyl-L-amino acid + a tRNA + H(+). Hydrolyzes ribosome-free peptidyl-tRNAs (with 1 or more amino acids incorporated), which drop off the ribosome during protein synthesis, or as a result of ribosome stalling. Functionally, catalyzes the release of premature peptidyl moieties from peptidyl-tRNA molecules trapped in stalled 50S ribosomal subunits, and thus maintains levels of free tRNAs and 50S ribosomes. This is Peptidyl-tRNA hydrolase from Marinomonas sp. (strain MWYL1).